A 448-amino-acid chain; its full sequence is Ribosomal protein uS12 methylthiotransferase RimO (448 aa).

The MTTase N-terminal domain occupies 16–126; that stretch reads PRISFVSLGC…VVAAVHEAVP (111 aa). [4Fe-4S] cluster contacts are provided by cysteine 25, cysteine 61, cysteine 90, cysteine 157, cysteine 161, and cysteine 164. Positions 143-380 constitute a Radical SAM core domain; sequence LTPRHYAYLK…MEAQSHVSLR (238 aa). Positions 383–448 constitute a TRAM domain; the sequence is RAKVGKRLSV…DAYDLHGIAV (66 aa).

It belongs to the methylthiotransferase family. RimO subfamily. The cofactor is [4Fe-4S] cluster.

The protein localises to the cytoplasm. The catalysed reaction is L-aspartate(89)-[ribosomal protein uS12]-hydrogen + (sulfur carrier)-SH + AH2 + 2 S-adenosyl-L-methionine = 3-methylsulfanyl-L-aspartate(89)-[ribosomal protein uS12]-hydrogen + (sulfur carrier)-H + 5'-deoxyadenosine + L-methionine + A + S-adenosyl-L-homocysteine + 2 H(+). Its function is as follows. Catalyzes the methylthiolation of an aspartic acid residue of ribosomal protein uS12. The protein is Ribosomal protein uS12 methylthiotransferase RimO of Methylorubrum extorquens (strain PA1) (Methylobacterium extorquens).